A 560-amino-acid chain; its full sequence is Arginine--tRNA ligase (560 aa).

The short motif at 122-132 is the 'HIGH' region element; sequence ANPNGPLHIGH.

It belongs to the class-I aminoacyl-tRNA synthetase family.

It localises to the cytoplasm. It catalyses the reaction tRNA(Arg) + L-arginine + ATP = L-arginyl-tRNA(Arg) + AMP + diphosphate. This Methanothermobacter thermautotrophicus (strain ATCC 29096 / DSM 1053 / JCM 10044 / NBRC 100330 / Delta H) (Methanobacterium thermoautotrophicum) protein is Arginine--tRNA ligase (argS).